A 451-amino-acid chain; its full sequence is D(1A) dopamine receptor (451 aa).

The Extracellular segment spans residues 1-22 (MTFNITSMDEDVLLTERESSFR). N4 is a glycosylation site (N-linked (GlcNAc...) asparagine). The chain crosses the membrane as a helical span at residues 23-48 (VLTGCFLSVLILSTLLGNTLVCAAVI). At 49 to 59 (RFRHLRSKVTN) the chain is on the cytoplasmic side. A helical transmembrane segment spans residues 60–86 (FFVISLAVSDLLVAVLVMPWKAVAEIA). At 87–95 (GFWPFGTFC) the chain is on the extracellular side. C95 and C185 are disulfide-bonded. The chain crosses the membrane as a helical span at residues 96 to 118 (NIWVAFDIMCSTASILNLCVISV). Residues 119–137 (DRYWAISSPFRYERKMTPK) lie on the Cytoplasmic side of the membrane. A helical membrane pass occupies residues 138–162 (VAFIMIGVAWTLSVLISFIPVQLNW). Over 163–191 (HKAKTTSFFDLNITLHDRTMDNCDSSLNR) the chain is Extracellular. A helical transmembrane segment spans residues 192–217 (TYAISSSLISFYIPVAIMIVTYTRIY). Residues 218 to 271 (RIAAKQIRRISALERAAVHAKNCQNSTSNRNSLDCQQPESSLKTSFKRETKVLK) are Cytoplasmic-facing. The helical transmembrane segment at 272–298 (TLSVIMGVFVCCWLPFFILNCIVPFCD) threads the bilayer. Over 299 to 315 (PSLTTSGTEPFCISSTT) the chain is Extracellular. Residues 316–340 (FDVFVWFGWANSSLNPIIYAFNADF) traverse the membrane as a helical segment. Residues 341-451 (RKAFSNLLGC…PITQNGQPKT (111 aa)) are Cytoplasmic-facing. A lipid anchor (S-palmitoyl cysteine) is attached at C350.

It belongs to the G-protein coupled receptor 1 family. As to expression, brain.

It localises to the cell membrane. It is found in the cell projection. Its subcellular location is the cilium membrane. Dopamine receptor whose activity is mediated by G proteins which activate adenylyl cyclase. The chain is D(1A) dopamine receptor (drd1) from Xenopus laevis (African clawed frog).